A 153-amino-acid polypeptide reads, in one-letter code: Prefoldin subunit alpha (153 aa).

The segment at 126 to 153 (KRLEQGYRQAPGGSPVPHRHDHEDHDEE) is disordered. Positions 143 to 153 (HRHDHEDHDEE) are enriched in basic and acidic residues.

The protein belongs to the prefoldin alpha subunit family. In terms of assembly, heterohexamer of two alpha and four beta subunits.

Its subcellular location is the cytoplasm. In terms of biological role, molecular chaperone capable of stabilizing a range of proteins. Seems to fulfill an ATP-independent, HSP70-like function in archaeal de novo protein folding. This chain is Prefoldin subunit alpha, found in Methanoregula boonei (strain DSM 21154 / JCM 14090 / 6A8).